Consider the following 804-residue polypeptide: ABC transporter aclQ (804 aa).

Helical transmembrane passes span 3–23 (LAVL…ISYL), 52–72 (FTAI…SITI), 97–117 (IAVF…PFSP), 119–139 (LSHS…LAMF), 155–175 (LQLG…ALYF), 206–226 (HGGW…LWPS), 239–259 (FVLL…LGIV), 349–369 (LVFQ…YFLI), and 373–393 (AFYS…TIYM). Positions 236-518 (IFCFVLLVIQ…FGSFYTQVQN (283 aa)) constitute an ABC transmembrane type-1 domain. A glycan (N-linked (GlcNAc...) asparagine) is linked at Asn-460. The next 2 membrane-spanning stretches (helical) occupy residues 464–484 (NLLF…QISA) and 489–509 (VAMF…LNFF). The region spanning 552–786 (VEFTHVNFAY…NGMYSQMWAK (235 aa)) is the ABC transporter domain. 585–592 (GESGSGKS) serves as a coordination point for ATP. N-linked (GlcNAc...) asparagine glycosylation is found at Asn-639 and Asn-797.

The protein belongs to the ABC transporter superfamily. ABCB family. Heavy Metal importer (TC 3.A.1.210) subfamily.

The protein resides in the membrane. Its function is as follows. ABC transporter; part of the gene cluster that mediates the biosynthesis of aspirochlorine (or antibiotic A30641), an unusual halogenated spiro compound with distinctive antifungal properties due to selective inhibition of protein biosynthesis, and which is also active against bacteria, viruses, and murine tumor cells. This Aspergillus oryzae (strain ATCC 42149 / RIB 40) (Yellow koji mold) protein is ABC transporter aclQ.